The following is a 688-amino-acid chain: DNA ligase (688 aa).

Residues 51–55 (DSEYD), 100–101 (SL), and E129 contribute to the NAD(+) site. K131 serves as the catalytic N6-AMP-lysine intermediate. NAD(+) is bound by residues R152, E189, K308, and K332. Zn(2+) contacts are provided by C426, C429, C444, and C450. Residues 609–688 (ADEQPLKGQT…DELLALLANS (80 aa)) enclose the BRCT domain.

Belongs to the NAD-dependent DNA ligase family. LigA subfamily. The cofactor is Mg(2+). It depends on Mn(2+) as a cofactor.

The enzyme catalyses NAD(+) + (deoxyribonucleotide)n-3'-hydroxyl + 5'-phospho-(deoxyribonucleotide)m = (deoxyribonucleotide)n+m + AMP + beta-nicotinamide D-nucleotide.. DNA ligase that catalyzes the formation of phosphodiester linkages between 5'-phosphoryl and 3'-hydroxyl groups in double-stranded DNA using NAD as a coenzyme and as the energy source for the reaction. It is essential for DNA replication and repair of damaged DNA. The polypeptide is DNA ligase (Shewanella sp. (strain MR-4)).